The sequence spans 211 residues: Endonuclease III (211 aa).

Residues 111 to 130 enclose the HhH domain; sequence AHALESLPGVGHKTANVVLN. [4Fe-4S] cluster contacts are provided by Cys-190, Cys-197, Cys-200, and Cys-206.

Belongs to the Nth/MutY family. [4Fe-4S] cluster is required as a cofactor.

It catalyses the reaction 2'-deoxyribonucleotide-(2'-deoxyribose 5'-phosphate)-2'-deoxyribonucleotide-DNA = a 3'-end 2'-deoxyribonucleotide-(2,3-dehydro-2,3-deoxyribose 5'-phosphate)-DNA + a 5'-end 5'-phospho-2'-deoxyribonucleoside-DNA + H(+). DNA repair enzyme that has both DNA N-glycosylase activity and AP-lyase activity. The DNA N-glycosylase activity releases various damaged pyrimidines from DNA by cleaving the N-glycosidic bond, leaving an AP (apurinic/apyrimidinic) site. The AP-lyase activity cleaves the phosphodiester bond 3' to the AP site by a beta-elimination, leaving a 3'-terminal unsaturated sugar and a product with a terminal 5'-phosphate. This Treponema pallidum (strain Nichols) protein is Endonuclease III.